The sequence spans 348 residues: Enkurin domain-containing protein 1 (348 aa).

Disordered stretches follow at residues 1–65 (MCEG…RPGG), 84–195 (GGIS…PSAK), and 262–282 (AEAR…TRMP). S93 carries the phosphoserine modification. Over residues 95 to 127 (KRKDPKDHEKENMRRIREIQRRFREQEHSREQG) the composition is skewed to basic and acidic residues. Phosphoserine is present on S138. A compositionally biased stretch (basic and acidic residues) spans 139-148 (PKYDKVESRV). Residues 253–345 (ERRDLWRREA…IFSRPKVFVK (93 aa)) form the Enkurin domain.

As to quaternary structure, interacts with alpha-tubulin. Interacts (via central region) with CCP110 (via N-terminal region); competes with CEP97 for binding to CCP110.

The protein localises to the cytoplasm. It localises to the cytoskeleton. The protein resides in the microtubule organizing center. It is found in the centrosome. Its subcellular location is the centriole. The protein localises to the cilium basal body. It localises to the cell projection. The protein resides in the cilium. It is found in the spindle. Its subcellular location is the spindle pole. The protein localises to the cilium axoneme. In terms of biological role, microtubule-binding protein which regulates microtubule organization and stability. Promotes the stability of astral microtubules and facilitates the proper orientation of the mitotic spindle. This allows the oriented division of basal keratinocytes and contributes to epidermal stratification. Required for the assembly of both primary and motile cilia. Destabilizes the interaction between CCP110 and CEP97 by competing with CEP97 for binding to CCP110 which promotes the removal of CCP110 and CEP97 from the mother centriole and allows the initiation of ciliogenesis. This is Enkurin domain-containing protein 1 (ENKD1) from Bos taurus (Bovine).